Here is a 549-residue protein sequence, read N- to C-terminus: Glucose-6-phosphate isomerase (549 aa).

Glu-355 functions as the Proton donor in the catalytic mechanism. Catalysis depends on residues His-387 and Lys-515.

Belongs to the GPI family.

The protein localises to the cytoplasm. It carries out the reaction alpha-D-glucose 6-phosphate = beta-D-fructose 6-phosphate. It functions in the pathway carbohydrate biosynthesis; gluconeogenesis. Its pathway is carbohydrate degradation; glycolysis; D-glyceraldehyde 3-phosphate and glycerone phosphate from D-glucose: step 2/4. Its function is as follows. Catalyzes the reversible isomerization of glucose-6-phosphate to fructose-6-phosphate. This chain is Glucose-6-phosphate isomerase, found in Mannheimia succiniciproducens (strain KCTC 0769BP / MBEL55E).